The primary structure comprises 68 residues: ATP synthase F(0) complex subunit 8 (68 aa).

The helical transmembrane segment at 8-24 (TWLITILSMILTLLIVF) threads the bilayer. Lys-54 carries the N6-acetyllysine; alternate modification. Lys-54 carries the N6-succinyllysine; alternate modification. An N6-acetyllysine modification is found at Lys-57.

This sequence belongs to the ATPase protein 8 family. In terms of assembly, component of the ATP synthase complex composed at least of ATP5F1A/subunit alpha, ATP5F1B/subunit beta, ATP5MC1/subunit c (homooctomer), MT-ATP6/subunit a, MT-ATP8/subunit 8, ATP5ME/subunit e, ATP5MF/subunit f, ATP5MG/subunit g, ATP5MK/subunit k, ATP5MJ/subunit j, ATP5F1C/subunit gamma, ATP5F1D/subunit delta, ATP5F1E/subunit epsilon, ATP5PF/subunit F6, ATP5PB/subunit b, ATP5PD/subunit d, ATP5PO/subunit OSCP. ATP synthase complex consists of a soluble F(1) head domain (subunits alpha(3) and beta(3)) - the catalytic core - and a membrane F(0) domain - the membrane proton channel (subunits c, a, 8, e, f, g, k and j). These two domains are linked by a central stalk (subunits gamma, delta, and epsilon) rotating inside the F1 region and a stationary peripheral stalk (subunits F6, b, d, and OSCP). Interacts with PRICKLE3.

The protein resides in the mitochondrion membrane. In terms of biological role, subunit 8, of the mitochondrial membrane ATP synthase complex (F(1)F(0) ATP synthase or Complex V) that produces ATP from ADP in the presence of a proton gradient across the membrane which is generated by electron transport complexes of the respiratory chain. ATP synthase complex consist of a soluble F(1) head domain - the catalytic core - and a membrane F(1) domain - the membrane proton channel. These two domains are linked by a central stalk rotating inside the F(1) region and a stationary peripheral stalk. During catalysis, ATP synthesis in the catalytic domain of F(1) is coupled via a rotary mechanism of the central stalk subunits to proton translocation. In vivo, can only synthesize ATP although its ATP hydrolase activity can be activated artificially in vitro. Part of the complex F(0) domain. This is ATP synthase F(0) complex subunit 8 from Lemur catta (Ring-tailed lemur).